The sequence spans 253 residues: Imidazole glycerol phosphate synthase subunit HisF (253 aa).

Catalysis depends on residues Asp11 and Asp130.

Belongs to the HisA/HisF family. In terms of assembly, heterodimer of HisH and HisF.

Its subcellular location is the cytoplasm. The catalysed reaction is 5-[(5-phospho-1-deoxy-D-ribulos-1-ylimino)methylamino]-1-(5-phospho-beta-D-ribosyl)imidazole-4-carboxamide + L-glutamine = D-erythro-1-(imidazol-4-yl)glycerol 3-phosphate + 5-amino-1-(5-phospho-beta-D-ribosyl)imidazole-4-carboxamide + L-glutamate + H(+). Its pathway is amino-acid biosynthesis; L-histidine biosynthesis; L-histidine from 5-phospho-alpha-D-ribose 1-diphosphate: step 5/9. IGPS catalyzes the conversion of PRFAR and glutamine to IGP, AICAR and glutamate. The HisF subunit catalyzes the cyclization activity that produces IGP and AICAR from PRFAR using the ammonia provided by the HisH subunit. The chain is Imidazole glycerol phosphate synthase subunit HisF from Lysinibacillus sphaericus (strain C3-41).